A 369-amino-acid chain; its full sequence is tRNA 2-selenouridine synthase (369 aa).

The Rhodanese domain occupies 12-136; sequence FLDDIPLMDV…LRNFLFETTR (125 aa). The active-site S-selanylcysteine intermediate is cysteine 95.

The protein belongs to the SelU family. In terms of assembly, monomer.

The catalysed reaction is 5-methylaminomethyl-2-thiouridine(34) in tRNA + selenophosphate + (2E)-geranyl diphosphate + H2O + H(+) = 5-methylaminomethyl-2-selenouridine(34) in tRNA + (2E)-thiogeraniol + phosphate + diphosphate. It carries out the reaction 5-methylaminomethyl-2-thiouridine(34) in tRNA + (2E)-geranyl diphosphate = 5-methylaminomethyl-S-(2E)-geranyl-thiouridine(34) in tRNA + diphosphate. It catalyses the reaction 5-methylaminomethyl-S-(2E)-geranyl-thiouridine(34) in tRNA + selenophosphate + H(+) = 5-methylaminomethyl-2-(Se-phospho)selenouridine(34) in tRNA + (2E)-thiogeraniol. The enzyme catalyses 5-methylaminomethyl-2-(Se-phospho)selenouridine(34) in tRNA + H2O = 5-methylaminomethyl-2-selenouridine(34) in tRNA + phosphate. In terms of biological role, involved in the post-transcriptional modification of the uridine at the wobble position (U34) of tRNA(Lys), tRNA(Glu) and tRNA(Gln). Catalyzes the conversion of 2-thiouridine (S2U-RNA) to 2-selenouridine (Se2U-RNA). Acts in a two-step process involving geranylation of 2-thiouridine (S2U) to S-geranyl-2-thiouridine (geS2U) and subsequent selenation of the latter derivative to 2-selenouridine (Se2U) in the tRNA chain. The chain is tRNA 2-selenouridine synthase from Pseudomonas aeruginosa (strain LESB58).